The sequence spans 278 residues: tRNA pseudouridine synthase A (278 aa).

Aspartate 51 acts as the Nucleophile in catalysis. Position 109 (tyrosine 109) interacts with substrate.

It belongs to the tRNA pseudouridine synthase TruA family. Homodimer.

It carries out the reaction uridine(38/39/40) in tRNA = pseudouridine(38/39/40) in tRNA. Its function is as follows. Formation of pseudouridine at positions 38, 39 and 40 in the anticodon stem and loop of transfer RNAs. In Paracidovorax citrulli (strain AAC00-1) (Acidovorax citrulli), this protein is tRNA pseudouridine synthase A.